The chain runs to 162 residues: Ribosomal RNA large subunit methyltransferase H (162 aa).

G108 serves as a coordination point for S-adenosyl-L-methionine.

The protein belongs to the RNA methyltransferase RlmH family. In terms of assembly, homodimer.

The protein resides in the cytoplasm. The enzyme catalyses pseudouridine(1915) in 23S rRNA + S-adenosyl-L-methionine = N(3)-methylpseudouridine(1915) in 23S rRNA + S-adenosyl-L-homocysteine + H(+). Specifically methylates the pseudouridine at position 1915 (m3Psi1915) in 23S rRNA. The polypeptide is Ribosomal RNA large subunit methyltransferase H (Methylobacterium sp. (strain 4-46)).